The sequence spans 153 residues: UPF0743 protein YCR087C-A (153 aa).

2 C2HC LYAR-type zinc fingers span residues 1 to 26 and 27 to 52; these read MVTF…YRCP and NAYY…TSCI. 8 residues coordinate Zn(2+): Cys-6, Cys-9, His-21, Cys-25, Cys-32, Cys-35, His-48, and Cys-51. Residues 63 to 96 are disordered; the sequence is YKGNKKQKQKQQQKQQQKQHQHQPVATPAKKVEK. Positions 65–83 are enriched in basic residues; that stretch reads GNKKQKQKQQQKQQQKQHQ.

This sequence belongs to the UPF0743 family.

It localises to the nucleus. It is found in the nucleolus. The chain is UPF0743 protein YCR087C-A from Saccharomyces cerevisiae (strain ATCC 204508 / S288c) (Baker's yeast).